The primary structure comprises 254 residues: Ditrans,polycis-undecaprenyl-diphosphate synthase ((2E,6E)-farnesyl-diphosphate specific) (254 aa).

Residue Asp25 is part of the active site. Asp25 contacts Mg(2+). Residues 26–29 (GNGR), Trp30, Arg38, His42, and 70–72 (SSE) each bind substrate. Asn73 serves as the catalytic Proton acceptor. Substrate contacts are provided by Trp74, Arg76, and Arg193. A Mg(2+)-binding site is contributed by His198. Residue 199-201 (RIS) participates in substrate binding. Glu212 provides a ligand contact to Mg(2+).

This sequence belongs to the UPP synthase family. In terms of assembly, homodimer. Requires Mg(2+) as cofactor.

It catalyses the reaction 8 isopentenyl diphosphate + (2E,6E)-farnesyl diphosphate = di-trans,octa-cis-undecaprenyl diphosphate + 8 diphosphate. Its function is as follows. Catalyzes the sequential condensation of isopentenyl diphosphate (IPP) with (2E,6E)-farnesyl diphosphate (E,E-FPP) to yield (2Z,6Z,10Z,14Z,18Z,22Z,26Z,30Z,34E,38E)-undecaprenyl diphosphate (di-trans,octa-cis-UPP). UPP is the precursor of glycosyl carrier lipid in the biosynthesis of bacterial cell wall polysaccharide components such as peptidoglycan and lipopolysaccharide. The sequence is that of Ditrans,polycis-undecaprenyl-diphosphate synthase ((2E,6E)-farnesyl-diphosphate specific) from Photorhabdus laumondii subsp. laumondii (strain DSM 15139 / CIP 105565 / TT01) (Photorhabdus luminescens subsp. laumondii).